Reading from the N-terminus, the 176-residue chain is MNFELIYVSSLLLGICLANQADVVPSDCNLPADAGMCYAYFPMFFYDASSRKCLNFIYGGCGGNANRFWSEAECMEKCGGGGGGGGSSDGSQKTAKMLNLDLGDICSLEKKVGPCKAHMPRYYFNRETGLCEEFIYGGCSGNHNNFQTKEQCESFCAPGNSPRPEEETRKRTKQSY.

The N-terminal stretch at 1-18 (MNFELIYVSSLLLGICLA) is a signal peptide. BPTI/Kunitz inhibitor domains follow at residues 28–78 (CNLP…MEKC) and 106–156 (CSLE…ESFC). Disulfide bonds link Cys28-Cys78, Cys37-Cys61, Cys53-Cys74, Cys106-Cys156, Cys115-Cys139, and Cys131-Cys152. The segment at 155 to 176 (FCAPGNSPRPEEETRKRTKQSY) is disordered.

This sequence belongs to the venom Kunitz-type family. As to expression, expressed by the venom gland.

It is found in the secreted. Its function is as follows. Serine protease inhibitor that inhibits trypsin at a molar ratio of 1:1. The polypeptide is Kunitz-type U19-barytoxin-Tl1a (Trittame loki (Brush-footed trapdoor spider)).